A 360-amino-acid chain; its full sequence is Aminomethyltransferase (360 aa).

The protein belongs to the GcvT family. The glycine cleavage system is composed of four proteins: P, T, L and H.

It carries out the reaction N(6)-[(R)-S(8)-aminomethyldihydrolipoyl]-L-lysyl-[protein] + (6S)-5,6,7,8-tetrahydrofolate = N(6)-[(R)-dihydrolipoyl]-L-lysyl-[protein] + (6R)-5,10-methylene-5,6,7,8-tetrahydrofolate + NH4(+). Functionally, the glycine cleavage system catalyzes the degradation of glycine. In Pseudoalteromonas translucida (strain TAC 125), this protein is Aminomethyltransferase.